Reading from the N-terminus, the 281-residue chain is Tumor necrosis factor ligand superfamily member 6 (281 aa).

At 1–80 (MQQPFNYPYP…LKKRGNHSTG (80 aa)) the chain is on the cytoplasmic side. The interval 20–71 (SSPWAPPGTVLPCPTSVPRRPGQRRPPPPPPPPPLPPPPPPPPLPPLPLPPL) is disordered. Positions 43–70 (RRPPPPPPPPPLPPPPPPPPLPPLPLPP) are enriched in pro residues. A helical; Signal-anchor for type II membrane protein transmembrane segment spans residues 81–102 (LCLLVMFFMVLVALVGLGLGMF). Topologically, residues 103-281 (QLFHLQKELA…SQTFFGLYKL (179 aa)) are extracellular. The span at 118–128 (TSQMHTASSLE) shows a compositional bias: polar residues. The interval 118–142 (TSQMHTASSLEKQIGHPSPPPEKKE) is disordered. The THD domain maps to 145-281 (KVAHLTGKSN…SQTFFGLYKL (137 aa)). The N-linked (GlcNAc...) asparagine glycan is linked to N184. Residues C202 and C233 are joined by a disulfide bond. 2 N-linked (GlcNAc...) asparagine glycosylation sites follow: N250 and N260.

It belongs to the tumor necrosis factor family. In terms of assembly, homotrimer. Interacts with ARHGAP9, BAIAP2L1, BTK, CACNB3, CACNB4, CRK, DLG2, DNMBP, DOCK4, EPS8L3, FGR, FYB1, FYN, HCK, ITK, ITSN2, KALRN, LYN, MACC1, MIA, MPP4, MYO15A, NCF1, NCK1, NCK2, NCKIPSD, OSTF1, PIK3R1, PSTPIP1, RIMBP3C, SAMSN1, SH3GL3, SH3PXD2B, SH3PXD2A, SH3RF2, SKAP2, SNX33, SNX9, SORBS3, SPTA1, SRC, SRGAP1, SRGAP2, SRGAP3, TEC, TJP3 and YES1. The soluble form derives from the membrane form by proteolytic processing. The membrane-bound form undergoes two successive intramembrane proteolytic cleavages. The first one is processed by ADAM10 producing an N-terminal fragment, which lacks the receptor-binding extracellular domain. This ADAM10-processed FasL (FasL APL) remnant form is still membrane anchored and further processed by SPPL2A that liberates the FasL intracellular domain (FasL ICD). FasL shedding by ADAM10 is a prerequisite for subsequent intramembrane cleavage by SPPL2A in T-cells. In terms of processing, N-glycosylated. Glycosylation enhances apoptotic activity. Post-translationally, phosphorylated by FGR on tyrosine residues; this is required for ubiquitination and subsequent internalization. Monoubiquitinated.

The protein resides in the cell membrane. Its subcellular location is the cytoplasmic vesicle lumen. The protein localises to the lysosome lumen. It is found in the secreted. It localises to the nucleus. Cytokine that binds to TNFRSF6/FAS, a receptor that transduces the apoptotic signal into cells. Involved in cytotoxic T-cell-mediated apoptosis, natural killer cell-mediated apoptosis and in T-cell development. Initiates fratricidal/suicidal activation-induced cell death (AICD) in antigen-activated T-cells contributing to the termination of immune responses. TNFRSF6/FAS-mediated apoptosis also has a role in the induction of peripheral tolerance. Binds to TNFRSF6B/DcR3, a decoy receptor that blocks apoptosis. Functionally, induces FAS-mediated activation of NF-kappa-B, initiating non-apoptotic signaling pathways. Can induce apoptosis but does not appear to be essential for this process. Its function is as follows. Cytoplasmic form induces gene transcription inhibition. This Homo sapiens (Human) protein is Tumor necrosis factor ligand superfamily member 6 (FASLG).